A 282-amino-acid chain; its full sequence is Phosphatidylglycerol--prolipoprotein diacylglyceryl transferase (282 aa).

A run of 3 helical transmembrane segments spans residues 18-38 (LSIKWYGIIIAVGILIGYFIA), 55-75 (VIFYSAIFGFIAARIYFVIFQ), and 89-109 (IWHGGIAIHGGLLGGFITGII). A 1,2-diacyl-sn-glycero-3-phospho-(1'-sn-glycerol) is bound at residue Arg-137. Transmembrane regions (helical) follow at residues 203–223 (VGETFTLYLIWYSIGRFFVEG) and 235–255 (IRVAQLVSVILIIIGLVILIY).

The protein belongs to the Lgt family.

The protein localises to the cell membrane. The catalysed reaction is L-cysteinyl-[prolipoprotein] + a 1,2-diacyl-sn-glycero-3-phospho-(1'-sn-glycerol) = an S-1,2-diacyl-sn-glyceryl-L-cysteinyl-[prolipoprotein] + sn-glycerol 1-phosphate + H(+). It functions in the pathway protein modification; lipoprotein biosynthesis (diacylglyceryl transfer). Catalyzes the transfer of the diacylglyceryl group from phosphatidylglycerol to the sulfhydryl group of the N-terminal cysteine of a prolipoprotein, the first step in the formation of mature lipoproteins. The sequence is that of Phosphatidylglycerol--prolipoprotein diacylglyceryl transferase from Staphylococcus haemolyticus (strain JCSC1435).